Here is an 84-residue protein sequence, read N- to C-terminus: Molybdopterin synthase sulfur carrier subunit (84 aa).

Residue Gly84 is modified to 1-thioglycine; alternate. Residue Gly84 is modified to Glycyl adenylate; alternate.

Belongs to the MoaD family. MOCS2A subfamily. In terms of assembly, heterotetramer; composed of 2 small (MOCS2A) and 2 large (MOCS2B) subunits. Post-translationally, C-terminal thiocarboxylation occurs in 2 steps, it is first acyl-adenylated (-COAMP) via the hesA/moeB/thiF part of MOCS3, then thiocarboxylated (-COSH) via the rhodanese domain of MOCS3.

It localises to the cytoplasm. The protein operates within cofactor biosynthesis; molybdopterin biosynthesis. Its function is as follows. Acts as a sulfur carrier required for molybdopterin biosynthesis. Component of the molybdopterin synthase complex that catalyzes the conversion of precursor Z into molybdopterin by mediating the incorporation of 2 sulfur atoms into precursor Z to generate a dithiolene group. In the complex, serves as sulfur donor by being thiocarboxylated (-COSH) at its C-terminus by MOCS3. After interaction with MOCS2B, the sulfur is then transferred to precursor Z to form molybdopterin. The chain is Molybdopterin synthase sulfur carrier subunit from Caenorhabditis elegans.